We begin with the raw amino-acid sequence, 98 residues long: NADH-ubiquinone oxidoreductase chain 4L (98 aa).

The next 3 helical transmembrane spans lie at 1–21 (MSITYMNMFMAFTISLLGLLM), 29–49 (SLLCLEGMMLSLFVMMTMAIL), and 61–81 (IILLVFAACEAALGLSLLVMV).

It belongs to the complex I subunit 4L family. As to quaternary structure, core subunit of respiratory chain NADH dehydrogenase (Complex I) which is composed of 45 different subunits.

It localises to the mitochondrion inner membrane. The catalysed reaction is a ubiquinone + NADH + 5 H(+)(in) = a ubiquinol + NAD(+) + 4 H(+)(out). Its function is as follows. Core subunit of the mitochondrial membrane respiratory chain NADH dehydrogenase (Complex I) which catalyzes electron transfer from NADH through the respiratory chain, using ubiquinone as an electron acceptor. Part of the enzyme membrane arm which is embedded in the lipid bilayer and involved in proton translocation. The sequence is that of NADH-ubiquinone oxidoreductase chain 4L (MT-ND4L) from Mesophylla macconnelli (MacConnell's bat).